Reading from the N-terminus, the 260-residue chain is 3'-5' ssDNA/RNA exonuclease TatD (260 aa).

Residues glutamate 91, histidine 127, and histidine 152 each coordinate a divalent metal cation.

It belongs to the metallo-dependent hydrolases superfamily. TatD-type hydrolase family. TatD subfamily. Monomer. Requires Mg(2+) as cofactor.

It localises to the cytoplasm. Its function is as follows. 3'-5' exonuclease that prefers single-stranded DNA and RNA. May play a role in the H(2)O(2)-induced DNA damage repair. This Enterobacter lignolyticus (strain SCF1) protein is 3'-5' ssDNA/RNA exonuclease TatD.